We begin with the raw amino-acid sequence, 360 residues long: uncharacterized protein (360 aa).

The segment at 193 to 245 (SRHTRPKGQPLSSPKKNSGSAARPSTAIGLCRRSQTPGALQSTGPSNTELEPE) is disordered. 2 stretches are compositionally biased toward polar residues: residues 202–212 (PLSSPKKNSGS) and 225–241 (RSQTPGALQSTGPSNTE).

This is an uncharacterized protein from Homo sapiens (Human).